Consider the following 302-residue polypeptide: Plant UBX domain-containing protein 3 (302 aa).

Disordered stretches follow at residues 1 to 64 (MSSK…PKHD) and 79 to 98 (VEGP…TGRL). One can recognise an SEP domain in the interval 113-177 (PVIHNIIFWS…NLMRRDEKCP (65 aa)). Positions 224–301 (ETLPSTSIQL…GLASSVVIQK (78 aa)) constitute a UBX domain.

In terms of assembly, interacts with CDC48A.

The chain is Plant UBX domain-containing protein 3 from Arabidopsis thaliana (Mouse-ear cress).